The primary structure comprises 122 residues: Large ribosomal subunit protein uL14 (122 aa).

Belongs to the universal ribosomal protein uL14 family. In terms of assembly, part of the 50S ribosomal subunit. Forms a cluster with proteins L3 and L19. In the 70S ribosome, L14 and L19 interact and together make contacts with the 16S rRNA in bridges B5 and B8.

In terms of biological role, binds to 23S rRNA. Forms part of two intersubunit bridges in the 70S ribosome. The chain is Large ribosomal subunit protein uL14 from Paraburkholderia phymatum (strain DSM 17167 / CIP 108236 / LMG 21445 / STM815) (Burkholderia phymatum).